We begin with the raw amino-acid sequence, 685 residues long: Sulfite reductase [ferredoxin], chloroplastic (685 aa).

Residues 1–51 (MTTSFAAAALRDPKLQIPNYHGLRSSSAASSLSRNALSVPSSTRSSSLIRA) constitute a chloroplast transit peptide. The [4Fe-4S] cluster site is built by C495, C501, C541, and C545. C545 lines the siroheme pocket.

It belongs to the nitrite and sulfite reductase 4Fe-4S domain family. In terms of assembly, monomer. Interacts with ferredoxin. It depends on siroheme as a cofactor. [4Fe-4S] cluster serves as cofactor. Post-translationally, phosphorylated; this phosphorylation reduces DNA-binding. In terms of tissue distribution, expressed in leaves, stems, and roots.

The protein localises to the plastid. Its subcellular location is the chloroplast stroma. It localises to the chloroplast nucleoid. The protein resides in the plastid stroma. It catalyses the reaction hydrogen sulfide + 6 oxidized [2Fe-2S]-[ferredoxin] + 3 H2O = sulfite + 6 reduced [2Fe-2S]-[ferredoxin] + 7 H(+). In terms of biological role, essential protein with sulfite reductase activity required in assimilatory sulfate reduction pathway during both primary and secondary metabolism and thus involved in development and growth. Its function is as follows. DNA-binding protein that binds to both double-stranded and single-stranded DNA without significant sequence specificity to reversibly repress the transcriptional activity of chloroplast nucleoids by promoting DNA compaction and possibly regulate DNA replication. In Pisum sativum (Garden pea), this protein is Sulfite reductase [ferredoxin], chloroplastic (SIR).